A 153-amino-acid polypeptide reads, in one-letter code: Pheromone-binding protein Gp-9 (153 aa).

The N-terminal stretch at 1-19 (MKTFVLHIFIFALVAFASA) is a signal peptide. 3 disulfide bridges follow: cysteine 37/cysteine 77, cysteine 73/cysteine 129, and cysteine 118/cysteine 138.

The protein belongs to the PBP/GOBP family. As to quaternary structure, homodimer.

The protein resides in the secreted. Colony queen number, a major feature of social organization, is associated with worker genotype for Gp-9. Colonies are headed by either a single reproductive queen (monogyne form) or multiple queens (polygyne form). Differences in worker Gp-9 genotypes between social forms may cause differences in workers' abilities to recognize queens and regulate their numbers. The protein is Pheromone-binding protein Gp-9 of Solenopsis invicta (Red imported fire ant).